Reading from the N-terminus, the 221-residue chain is Cytidylate kinase 1 (221 aa).

7 to 15 (GPSASGKSS) provides a ligand contact to ATP.

It belongs to the cytidylate kinase family. Type 1 subfamily.

The protein localises to the cytoplasm. The catalysed reaction is CMP + ATP = CDP + ADP. It catalyses the reaction dCMP + ATP = dCDP + ADP. The polypeptide is Cytidylate kinase 1 (Borrelia garinii subsp. bavariensis (strain ATCC BAA-2496 / DSM 23469 / PBi) (Borreliella bavariensis)).